The primary structure comprises 377 residues: Protein-tyrosine sulfotransferase 2 (377 aa).

Over 1–8 the chain is Cytoplasmic; the sequence is MRLSMRRA. Residues 9–25 form a helical; Signal-anchor for type II membrane protein membrane-spanning segment; sequence LLAAGLALALVLAVHLG. Residues 26-377 lie on the Lumenal side of the membrane; sequence QRVLECQAVL…NSTSSHLGSS (352 aa). Residue 78–82 participates in 3'-phosphoadenylyl sulfate binding; the sequence is RSGTT. Cysteine 96 and cysteine 156 are oxidised to a cystine. Glutamate 99 acts as the Proton donor/acceptor in catalysis. An interaction with peptide substrate region spans residues 101–105; it reads RIIPR. 3 residues coordinate 3'-phosphoadenylyl sulfate: arginine 183, serine 191, and arginine 195. Cysteine 225 and cysteine 233 are joined by a disulfide. 3'-phosphoadenylyl sulfate contacts are provided by residues tyrosine 238, 285–294, and lysine 300; that span reads STDQVIKPVN. 2 N-linked (GlcNAc...) asparagine glycosylation sites follow: asparagine 343 and asparagine 368.

The protein belongs to the protein sulfotransferase family. Homodimer. Can also form heterodimers with TPST1. N-glycosylated.

It localises to the golgi apparatus membrane. The enzyme catalyses L-tyrosyl-[protein] + 3'-phosphoadenylyl sulfate = O-sulfo-L-tyrosine-[protein] + adenosine 3',5'-bisphosphate + H(+). Catalyzes the O-sulfation of tyrosine residues within acidic motifs of polypeptides, using 3'-phosphoadenylyl sulfate (PAPS) as cosubstrate. The sequence is that of Protein-tyrosine sulfotransferase 2 (TPST2) from Bos taurus (Bovine).